The following is a 316-amino-acid chain: Homoserine O-succinyltransferase (316 aa).

C142 (acyl-thioester intermediate) is an active-site residue. Positions 163 and 192 each coordinate substrate. H235 functions as the Proton acceptor in the catalytic mechanism. E237 is a catalytic residue. A substrate-binding site is contributed by R249.

This sequence belongs to the MetA family.

Its subcellular location is the cytoplasm. It catalyses the reaction L-homoserine + succinyl-CoA = O-succinyl-L-homoserine + CoA. It participates in amino-acid biosynthesis; L-methionine biosynthesis via de novo pathway; O-succinyl-L-homoserine from L-homoserine: step 1/1. Functionally, transfers a succinyl group from succinyl-CoA to L-homoserine, forming succinyl-L-homoserine. The protein is Homoserine O-succinyltransferase of Shewanella amazonensis (strain ATCC BAA-1098 / SB2B).